The primary structure comprises 155 residues: Myosin light chain alkali (155 aa).

2 EF-hand domains span residues 7 to 41 (REVE…LNLN) and 80 to 115 (GCYE…LGES).

In terms of assembly, myosin is a hexamer of 2 heavy chains and 4 light chains. As to expression, indirect flight muscle isoform is found only in the indirect flight muscles. The larval and adult isoform is present in the larval and adult musculature.

In Drosophila melanogaster (Fruit fly), this protein is Myosin light chain alkali (Mlc1).